The sequence spans 117 residues: Large ribosomal subunit protein bL20 (117 aa).

Belongs to the bacterial ribosomal protein bL20 family.

In terms of biological role, binds directly to 23S ribosomal RNA and is necessary for the in vitro assembly process of the 50S ribosomal subunit. It is not involved in the protein synthesizing functions of that subunit. The sequence is that of Large ribosomal subunit protein bL20 from Roseiflexus castenholzii (strain DSM 13941 / HLO8).